The chain runs to 249 residues: Acetylglutamate kinase (249 aa).

Substrate is bound by residues 42 to 43, R64, and N155; that span reads GG.

The protein belongs to the acetylglutamate kinase family. ArgB subfamily.

It is found in the cytoplasm. It carries out the reaction N-acetyl-L-glutamate + ATP = N-acetyl-L-glutamyl 5-phosphate + ADP. It participates in amino-acid biosynthesis; L-arginine biosynthesis; N(2)-acetyl-L-ornithine from L-glutamate: step 2/4. Its function is as follows. Catalyzes the ATP-dependent phosphorylation of N-acetyl-L-glutamate. This is Acetylglutamate kinase from Endomicrobium trichonymphae.